We begin with the raw amino-acid sequence, 181 residues long: Protein FAM237A (181 aa).

The signal sequence occupies residues 1-33; the sequence is MADPGNRGGIHRPLSFTCSLLIVGMCCVSPFFC. L113 carries the post-translational modification Leucine amide. The propeptide at 114–181 is removed in the mature form; that stretch reads GRRQLVGEEE…GKVNLEIKRK (68 aa).

The active form requires C-terminal amidation and disulfide bond formation. In terms of tissue distribution, expressed in the pituitary, testis, and heart and at lower levels in the brain.

It is found in the secreted. In terms of biological role, may be capable of activating GPR83 via the GNAQ signaling pathway. The protein is Protein FAM237A of Homo sapiens (Human).